Here is a 125-residue protein sequence, read N- to C-terminus: Small ribosomal subunit protein uS12 (125 aa).

The tract at residues 1–23 is disordered; the sequence is MATVNQLVRKGRTKRTAKSSVPA. Aspartate 89 is modified (3-methylthioaspartic acid). The tract at residues 102-125 is disordered; that stretch reads ADTAGVDKRRQGRSKYGAKRPKKK. Residues 111–125 show a composition bias toward basic residues; it reads RQGRSKYGAKRPKKK.

The protein belongs to the universal ribosomal protein uS12 family. In terms of assembly, part of the 30S ribosomal subunit. Contacts proteins S8 and S17. May interact with IF1 in the 30S initiation complex.

With S4 and S5 plays an important role in translational accuracy. In terms of biological role, interacts with and stabilizes bases of the 16S rRNA that are involved in tRNA selection in the A site and with the mRNA backbone. Located at the interface of the 30S and 50S subunits, it traverses the body of the 30S subunit contacting proteins on the other side and probably holding the rRNA structure together. The combined cluster of proteins S8, S12 and S17 appears to hold together the shoulder and platform of the 30S subunit. The polypeptide is Small ribosomal subunit protein uS12 (Halorhodospira halophila (strain DSM 244 / SL1) (Ectothiorhodospira halophila (strain DSM 244 / SL1))).